We begin with the raw amino-acid sequence, 31 residues long: Potassium channel toxin alpha-KTx 5.5 (31 aa).

Disulfide bonds link C3–C21, C8–C26, and C12–C28. The tract at residues 6 to 9 (RRCE) is [R/K]XCQ motif. At H31 the chain carries Histidine amide.

As to expression, expressed by the venom gland.

The protein localises to the secreted. Its function is as follows. Blocks small conductance calcium-activated potassium channels. This chain is Potassium channel toxin alpha-KTx 5.5, found in Hottentotta tamulus (Eastern Indian scorpion).